A 112-amino-acid polypeptide reads, in one-letter code: Large ribosomal subunit protein eL30 (112 aa).

Belongs to the eukaryotic ribosomal protein eL30 family.

The sequence is that of Large ribosomal subunit protein eL30 (RPL30) from Lupinus luteus (European yellow lupine).